Consider the following 210-residue polypeptide: Outer-membrane lipoprotein LolB (210 aa).

The first 19 residues, 1 to 19 (MNHLKSFFTALVAGFILTA), serve as a signal peptide directing secretion. Residue C20 is the site of N-palmitoyl cysteine attachment. C20 carries S-diacylglycerol cysteine lipidation.

It belongs to the LolB family. As to quaternary structure, monomer.

It localises to the cell outer membrane. Its function is as follows. Plays a critical role in the incorporation of lipoproteins in the outer membrane after they are released by the LolA protein. This is Outer-membrane lipoprotein LolB from Mannheimia succiniciproducens (strain KCTC 0769BP / MBEL55E).